A 321-amino-acid polypeptide reads, in one-letter code: uncharacterized protein (321 aa).

Residues 1-12 (MSMFLKKQKKTK) are compositionally biased toward basic residues. Disordered regions lie at residues 1 to 59 (MSMF…MRKT) and 71 to 289 (EDCT…GPED). A compositionally biased stretch (basic and acidic residues) spans 50-59 (DGIKETMRKT). Acidic residues predominate over residues 99–115 (DDSDSESSEDGGEDDEE). Residues 156–175 (SDSSSSSSSSSDSESSSSSD) are compositionally biased toward low complexity. Over residues 179-189 (DGDRSTPEPDI) the composition is skewed to basic and acidic residues. Residues 231-242 (EPSPLRAAAAAA) show a composition bias toward low complexity.

This is an uncharacterized protein from Equus caballus (Horse).